The chain runs to 254 residues: NFU1 iron-sulfur cluster scaffold homolog, mitochondrial (254 aa).

A mitochondrion-targeting transit peptide spans 1–9 (MAATARRGW). The nifU stretch occupies residues 173–241 (IKELLDTRIR…IPEVEGVEQV (69 aa)). 2 residues coordinate [4Fe-4S] cluster: Cys210 and Cys213.

It belongs to the NifU family. As to quaternary structure, monomer and homohexamer; the apo-NFU1 is a monomer, while the holo-NFU1 is a hexamer composed of a trimer of dimer that is probably linked by some 4Fe-4S cluster. Interacts with HIRA and EPM2A/laforin. Interacts with BOLA3. Interacts with HSPA9. In terms of tissue distribution, ubiquitous. Expression in adult lung is weak compared to fetal lung.

The protein localises to the mitochondrion. It localises to the cytoplasm. It is found in the cytosol. Functionally, iron-sulfur cluster scaffold protein which can assemble [4Fe-4S] clusters and deliver them to target proteins. The protein is NFU1 iron-sulfur cluster scaffold homolog, mitochondrial (NFU1) of Homo sapiens (Human).